We begin with the raw amino-acid sequence, 501 residues long: Cytochrome P450 71B25 (501 aa).

Residues M1–Y21 traverse the membrane as a helical segment. C445 contacts heme.

Belongs to the cytochrome P450 family. It depends on heme as a cofactor.

The protein localises to the membrane. The sequence is that of Cytochrome P450 71B25 (CYP71B25) from Arabidopsis thaliana (Mouse-ear cress).